An 80-amino-acid chain; its full sequence is Exodeoxyribonuclease 7 small subunit (80 aa).

This sequence belongs to the XseB family. Heterooligomer composed of large and small subunits.

The protein localises to the cytoplasm. The enzyme catalyses Exonucleolytic cleavage in either 5'- to 3'- or 3'- to 5'-direction to yield nucleoside 5'-phosphates.. Its function is as follows. Bidirectionally degrades single-stranded DNA into large acid-insoluble oligonucleotides, which are then degraded further into small acid-soluble oligonucleotides. This chain is Exodeoxyribonuclease 7 small subunit, found in Escherichia coli O6:K15:H31 (strain 536 / UPEC).